We begin with the raw amino-acid sequence, 195 residues long: IMP cyclohydrolase (195 aa).

The protein belongs to the archaeal IMP cyclohydrolase family.

The catalysed reaction is IMP + H2O = 5-formamido-1-(5-phospho-D-ribosyl)imidazole-4-carboxamide. Its pathway is purine metabolism; IMP biosynthesis via de novo pathway; IMP from 5-formamido-1-(5-phospho-D-ribosyl)imidazole-4-carboxamide: step 1/1. Functionally, catalyzes the cyclization of 5-formylamidoimidazole-4-carboxamide ribonucleotide to IMP. The polypeptide is IMP cyclohydrolase (Haloquadratum walsbyi (strain DSM 16790 / HBSQ001)).